Reading from the N-terminus, the 93-residue chain is UPF0297 protein PEPE_1262 (93 aa).

The protein belongs to the UPF0297 family.

This Pediococcus pentosaceus (strain ATCC 25745 / CCUG 21536 / LMG 10740 / 183-1w) protein is UPF0297 protein PEPE_1262.